We begin with the raw amino-acid sequence, 316 residues long: DNA-directed RNA polymerase subunit alpha (316 aa).

Positions 1–229 (MLEMEKPRID…EYLKLFTEID (229 aa)) are alpha N-terminal domain (alpha-NTD). The tract at residues 246–316 (KDKILEMSIE…LNLSFRKSED (71 aa)) is alpha C-terminal domain (alpha-CTD).

The protein belongs to the RNA polymerase alpha chain family. In terms of assembly, homodimer. The RNAP catalytic core consists of 2 alpha, 1 beta, 1 beta' and 1 omega subunit. When a sigma factor is associated with the core the holoenzyme is formed, which can initiate transcription.

The catalysed reaction is RNA(n) + a ribonucleoside 5'-triphosphate = RNA(n+1) + diphosphate. Functionally, DNA-dependent RNA polymerase catalyzes the transcription of DNA into RNA using the four ribonucleoside triphosphates as substrates. The chain is DNA-directed RNA polymerase subunit alpha from Syntrophomonas wolfei subsp. wolfei (strain DSM 2245B / Goettingen).